We begin with the raw amino-acid sequence, 734 residues long: Cullin-4 (734 aa).

Residues 666–728 (DRQFELQASI…KEYLEREDND (63 aa)) enclose the Cullin neddylation domain. Lysine 680 participates in a covalent cross-link: Glycyl lysine isopeptide (Lys-Gly) (interchain with G-Cter in NEDD8).

Belongs to the cullin family. In terms of assembly, component of the Clr4 methyltransferase complex (ClrC) composed of at least clr4, rik1, pcu4, rbx1, raf1 and raf2. The cullin pcu4, rik1, raf1, raf2 and the ring-box protein rbx1 are components of an E3 ubiquitin ligase, whose activity is essential for heterochromatin assembly. Post-translationally, neddylated; enhancing the ubiquitin-ligase activity.

It is found in the cytoplasm. The protein resides in the nucleus. It localises to the chromosome. The protein operates within protein modification; protein ubiquitination. Functionally, required, indirectly, for activation of ribonucleotide reductase through the degradation of the protein spd1, thereby supplying deoxyribonucleotides for DNA replication and repair. Also has a role as a scaffold for assembling ubiquitin ligases. Component of the Clr4 methyltransferase complex (ClrC) which contributes to the establishment of heterochromatin by specifically methylating histone H3 to form H3K9me. ClrC preferentially ubiquitylates H3K14 and ClrC-mediated H3 ubiquitination promotes clr4 methyltransferase activity for the methylation of H3K9. H3K9me represents a specific tag for epigenetic transcriptional repression by recruiting swi6/HP1 to methylated histones which leads to transcriptional silencing within centromeric heterochromatin, telomeric regions and at the silent mating-type loci. The sequence is that of Cullin-4 (pcu4) from Schizosaccharomyces pombe (strain 972 / ATCC 24843) (Fission yeast).